Reading from the N-terminus, the 168-residue chain is Large ribosomal subunit protein bL17 (168 aa).

A compositionally biased stretch (basic and acidic residues) spans 121–146 (AEAEGGEEKAEQKTEKKAAKAKEPKA). Residues 121-168 (AEAEGGEEKAEQKTEKKAAKAKEPKAAKAPKKAAAKPKAKAEKKGAEE) are disordered. The segment covering 148 to 158 (KAPKKAAAKPK) has biased composition (basic residues). The span at 159 to 168 (AKAEKKGAEE) shows a compositional bias: basic and acidic residues.

It belongs to the bacterial ribosomal protein bL17 family. As to quaternary structure, part of the 50S ribosomal subunit. Contacts protein L32.

In Anaeromyxobacter sp. (strain Fw109-5), this protein is Large ribosomal subunit protein bL17.